The following is a 380-amino-acid chain: Maintenance of mitochondrial morphology protein 1 (380 aa).

The Lumenal segment spans residues 1–64 (MQGRAIWAEG…IVPSLSFIQG (64 aa)). A helical membrane pass occupies residues 65–85 (FMAGQAVLLMLFLGLFRYFFM). The Cytoplasmic portion of the chain corresponds to 86–380 (TSSPGTRAQQ…IGTSPADPLA (295 aa)). The 223-residue stretch at 147-369 (APESLDWLNV…WPHFWHIPLP (223 aa)) folds into the SMP-LTD domain.

The protein belongs to the MMM1 family. In terms of assembly, homodimer. Component of the ER-mitochondria encounter structure (ERMES) or MDM complex, composed of MMM1, MDM10, MDM12 and MDM34. An MMM1 homodimer associates with one molecule of MDM12 on each side in a pairwise head-to-tail manner, and the SMP-LTD domains of MMM1 and MDM12 generate a continuous hydrophobic tunnel for phospholipid trafficking.

Its subcellular location is the endoplasmic reticulum membrane. Functionally, component of the ERMES/MDM complex, which serves as a molecular tether to connect the endoplasmic reticulum (ER) and mitochondria. Components of this complex are involved in the control of mitochondrial shape and protein biogenesis, and function in nonvesicular lipid trafficking between the ER and mitochondria. The MDM12-MMM1 subcomplex functions in the major beta-barrel assembly pathway that is responsible for biogenesis of all outer membrane beta-barrel proteins, and acts in a late step after the SAM complex. The MDM10-MDM12-MMM1 subcomplex further acts in the TOM40-specific pathway after the action of the MDM12-MMM1 complex. Essential for establishing and maintaining the structure of mitochondria and maintenance of mtDNA nucleoids. The polypeptide is Maintenance of mitochondrial morphology protein 1 (Malassezia globosa (strain ATCC MYA-4612 / CBS 7966) (Dandruff-associated fungus)).